The sequence spans 78 residues: Small ribosomal subunit protein bS16c (78 aa).

The protein belongs to the bacterial ribosomal protein bS16 family.

It is found in the plastid. Its subcellular location is the chloroplast. This Gracilaria tenuistipitata var. liui (Red alga) protein is Small ribosomal subunit protein bS16c.